A 644-amino-acid polypeptide reads, in one-letter code: Ribonuclease R (644 aa).

An RNB domain is found at arginine 211–phenylalanine 529. Positions leucine 573–serine 644 constitute an S1 motif domain.

It belongs to the RNR ribonuclease family. RNase R subfamily.

It is found in the cytoplasm. The catalysed reaction is Exonucleolytic cleavage in the 3'- to 5'-direction to yield nucleoside 5'-phosphates.. Functionally, 3'-5' exoribonuclease that releases 5'-nucleoside monophosphates and is involved in maturation of structured RNAs. The sequence is that of Ribonuclease R from Helicobacter pylori (strain J99 / ATCC 700824) (Campylobacter pylori J99).